Consider the following 416-residue polypeptide: Tyrosine aminotransferase (416 aa).

At K253 the chain carries N6-(pyridoxal phosphate)lysine.

It belongs to the class-I pyridoxal-phosphate-dependent aminotransferase family. In terms of assembly, homodimer. Pyridoxal 5'-phosphate is required as a cofactor. The N-terminus is blocked.

It is found in the cytoplasm. The protein localises to the mitochondrion. It carries out the reaction L-tyrosine + 2-oxoglutarate = 3-(4-hydroxyphenyl)pyruvate + L-glutamate. Its pathway is amino-acid degradation; L-phenylalanine degradation; acetoacetate and fumarate from L-phenylalanine: step 2/6. Transaminase involved in tyrosine breakdown. Converts tyrosine to p-hydroxyphenylpyruvate. The polypeptide is Tyrosine aminotransferase (Trypanosoma cruzi).